A 203-amino-acid chain; its full sequence is Flagellar transcriptional regulator FlhC (203 aa).

The Zn(2+) site is built by Cys-161, Cys-164, Cys-181, and Cys-184.

Belongs to the FlhC family. As to quaternary structure, heterohexamer composed of two FlhC and four FlhD subunits. Each FlhC binds a FlhD dimer, forming a heterotrimer, and a hexamer assembles by dimerization of two heterotrimers. Zn(2+) is required as a cofactor.

The protein resides in the cytoplasm. Functionally, functions in complex with FlhD as a master transcriptional regulator that regulates transcription of several flagellar and non-flagellar operons by binding to their promoter region. Activates expression of class 2 flagellar genes, including fliA, which is a flagellum-specific sigma factor that turns on the class 3 genes. Also regulates genes whose products function in a variety of physiological pathways. The polypeptide is Flagellar transcriptional regulator FlhC (Cupriavidus necator (strain ATCC 17699 / DSM 428 / KCTC 22496 / NCIMB 10442 / H16 / Stanier 337) (Ralstonia eutropha)).